Reading from the N-terminus, the 255-residue chain is Imidazole glycerol phosphate synthase subunit HisF (255 aa).

Catalysis depends on residues aspartate 12 and aspartate 131.

Belongs to the HisA/HisF family. As to quaternary structure, heterodimer of HisH and HisF.

The protein localises to the cytoplasm. It carries out the reaction 5-[(5-phospho-1-deoxy-D-ribulos-1-ylimino)methylamino]-1-(5-phospho-beta-D-ribosyl)imidazole-4-carboxamide + L-glutamine = D-erythro-1-(imidazol-4-yl)glycerol 3-phosphate + 5-amino-1-(5-phospho-beta-D-ribosyl)imidazole-4-carboxamide + L-glutamate + H(+). It participates in amino-acid biosynthesis; L-histidine biosynthesis; L-histidine from 5-phospho-alpha-D-ribose 1-diphosphate: step 5/9. In terms of biological role, IGPS catalyzes the conversion of PRFAR and glutamine to IGP, AICAR and glutamate. The HisF subunit catalyzes the cyclization activity that produces IGP and AICAR from PRFAR using the ammonia provided by the HisH subunit. The sequence is that of Imidazole glycerol phosphate synthase subunit HisF from Salinispora arenicola (strain CNS-205).